The following is a 221-amino-acid chain: Putative 3-methyladenine DNA glycosylase (221 aa).

The protein belongs to the DNA glycosylase MPG family.

In Herpetosiphon aurantiacus (strain ATCC 23779 / DSM 785 / 114-95), this protein is Putative 3-methyladenine DNA glycosylase.